Consider the following 149-residue polypeptide: Large ribosomal subunit protein uL22 (149 aa).

This sequence belongs to the universal ribosomal protein uL22 family. In terms of assembly, part of the 50S ribosomal subunit.

This protein binds specifically to 23S rRNA; its binding is stimulated by other ribosomal proteins, e.g. L4, L17, and L20. It is important during the early stages of 50S assembly. It makes multiple contacts with different domains of the 23S rRNA in the assembled 50S subunit and ribosome. Its function is as follows. The globular domain of the protein is located near the polypeptide exit tunnel on the outside of the subunit, while an extended beta-hairpin is found that lines the wall of the exit tunnel in the center of the 70S ribosome. The chain is Large ribosomal subunit protein uL22 from Petrotoga mobilis (strain DSM 10674 / SJ95).